Here is a 363-residue protein sequence, read N- to C-terminus: UDP-N-acetylglucosamine--N-acetylmuramyl-(pentapeptide) pyrophosphoryl-undecaprenol N-acetylglucosamine transferase (363 aa).

UDP-N-acetyl-alpha-D-glucosamine is bound by residues 10 to 12 (TGG), Asn-124, Ser-195, Ile-249, and Gln-294.

This sequence belongs to the glycosyltransferase 28 family. MurG subfamily.

It is found in the cell membrane. It catalyses the reaction Mur2Ac(oyl-L-Ala-gamma-D-Glu-L-Lys-D-Ala-D-Ala)-di-trans,octa-cis-undecaprenyl diphosphate + UDP-N-acetyl-alpha-D-glucosamine = beta-D-GlcNAc-(1-&gt;4)-Mur2Ac(oyl-L-Ala-gamma-D-Glu-L-Lys-D-Ala-D-Ala)-di-trans,octa-cis-undecaprenyl diphosphate + UDP + H(+). Its pathway is cell wall biogenesis; peptidoglycan biosynthesis. Its function is as follows. Cell wall formation. Catalyzes the transfer of a GlcNAc subunit on undecaprenyl-pyrophosphoryl-MurNAc-pentapeptide (lipid intermediate I) to form undecaprenyl-pyrophosphoryl-MurNAc-(pentapeptide)GlcNAc (lipid intermediate II). The sequence is that of UDP-N-acetylglucosamine--N-acetylmuramyl-(pentapeptide) pyrophosphoryl-undecaprenol N-acetylglucosamine transferase from Leuconostoc mesenteroides subsp. mesenteroides (strain ATCC 8293 / DSM 20343 / BCRC 11652 / CCM 1803 / JCM 6124 / NCDO 523 / NBRC 100496 / NCIMB 8023 / NCTC 12954 / NRRL B-1118 / 37Y).